Consider the following 311-residue polypeptide: Phosphoribosylaminoimidazole-succinocarboxamide synthase (311 aa).

The protein belongs to the SAICAR synthetase family.

It catalyses the reaction 5-amino-1-(5-phospho-D-ribosyl)imidazole-4-carboxylate + L-aspartate + ATP = (2S)-2-[5-amino-1-(5-phospho-beta-D-ribosyl)imidazole-4-carboxamido]succinate + ADP + phosphate + 2 H(+). It participates in purine metabolism; IMP biosynthesis via de novo pathway; 5-amino-1-(5-phospho-D-ribosyl)imidazole-4-carboxamide from 5-amino-1-(5-phospho-D-ribosyl)imidazole-4-carboxylate: step 1/2. In Azoarcus sp. (strain BH72), this protein is Phosphoribosylaminoimidazole-succinocarboxamide synthase.